The primary structure comprises 175 residues: NADH-ubiquinone oxidoreductase chain 6 (175 aa).

A run of 5 helical transmembrane segments spans residues methionine 1 to serine 21, serine 25 to leucine 45, phenylalanine 47 to valine 67, valine 88 to leucine 108, and tyrosine 149 to methionine 169.

This sequence belongs to the complex I subunit 6 family. In terms of assembly, core subunit of respiratory chain NADH dehydrogenase (Complex I) which is composed of 45 different subunits.

The protein resides in the mitochondrion inner membrane. The catalysed reaction is a ubiquinone + NADH + 5 H(+)(in) = a ubiquinol + NAD(+) + 4 H(+)(out). Its function is as follows. Core subunit of the mitochondrial membrane respiratory chain NADH dehydrogenase (Complex I) which catalyzes electron transfer from NADH through the respiratory chain, using ubiquinone as an electron acceptor. Essential for the catalytic activity and assembly of complex I. This is NADH-ubiquinone oxidoreductase chain 6 (MT-ND6) from Balaenoptera musculus (Blue whale).